The primary structure comprises 298 residues: ADP/ATP translocase 1 (298 aa).

Topologically, residues 1-7 (MGDQALS) are mitochondrial intermembrane. Glycine 2 carries the post-translational modification N-acetylglycine. Residues 6-98 (LSFLKDFLAG…FAFKDKYKQI (93 aa)) form a Solcar 1 repeat. Phosphoserine is present on serine 7. Residues 8–37 (FLKDFLAGGIAAAVSKTAVAPIERVKLLLQ) traverse the membrane as a helical segment. The Mitochondrial matrix portion of the chain corresponds to 38–74 (VQHASKQISAEKQYKGIIDCVVRIPKEQGFLSFWRGN). At lysine 52 the chain carries N6,N6,N6-trimethyllysine. A helical transmembrane segment spans residues 75–99 (LANVIRYFPTQALNFAFKDKYKQIF). Residues arginine 80 and lysine 92 each contribute to the ADP site. The Mitochondrial intermembrane segment spans residues 100 to 109 (LGGVDRHKQF). A helical transmembrane segment spans residues 110 to 130 (WRYFAGNLASGGAAGATSLCF). Solcar repeat units lie at residues 111–201 (RYFA…AKGM) and 212–297 (VSWM…IKKY). At 131–178 (VYPLDFARTRLAADVGKGSSQREFNGLGDCLTKIFKSDGLKGLYQGFS) the chain is on the mitochondrial matrix side. Lysine 147 bears the N6-succinyllysine mark. Phosphoserine occurs at positions 149 and 150. An S-nitrosocysteine modification is found at cysteine 160. Residues 179–199 (VSVQGIIIYRAAYFGVYDTAK) traverse the membrane as a helical segment. The Mitochondrial intermembrane segment spans residues 200-210 (GMLPDPKNVHI). A helical transmembrane segment spans residues 211-231 (IVSWMIAQSVTAVAGLVSYPF). The Mitochondrial matrix portion of the chain corresponds to 232-273 (DTVRRRMMMQSGRKGADIMYTGTVDCWRKIAKDEGRKAFFKG). Residue arginine 235 participates in ADP binding. The important for transport activity stretch occupies residues 235–240 (RRRMMM). The Nucleotide carrier signature motif signature appears at 235–240 (RRRMMM). Lysine 245 and lysine 272 each carry N6-succinyllysine. Residues 274-291 (AWSNVLRGMGGAFVLVLY) form a helical membrane-spanning segment. Residues 292–298 (DEIKKYV) lie on the Mitochondrial intermembrane side of the membrane.

It belongs to the mitochondrial carrier (TC 2.A.29) family. Monomer. Found in a complex with ARL2, ARL2BP and SLC25A4/ANT1. Interacts with ARL2BP. Interacts with TIMM44; leading to inhibit the presequence translocase TIMM23, thereby promoting stabilization of PINK1. Under cell death induction, transglutaminated by TGM2. Transglutamination leads to formation of covalent cross-links between a glutamine and the epsilon-amino group of a lysine residue, forming polymers.

It localises to the mitochondrion inner membrane. Its subcellular location is the membrane. The catalysed reaction is ADP(in) + ATP(out) = ADP(out) + ATP(in). The enzyme catalyses H(+)(in) = H(+)(out). With respect to regulation, the matrix-open state (m-state) is inhibited by the membrane-permeable bongkrekic acid (BKA). The cytoplasmic-open state (c-state) is inhibited by the membrane-impermeable toxic inhibitor carboxyatractyloside (CATR). Proton transporter activity is inhibited by ADP:ATP antiporter activity. ADP:ATP antiporter that mediates import of ADP into the mitochondrial matrix for ATP synthesis, and export of ATP out to fuel the cell. Cycles between the cytoplasmic-open state (c-state) and the matrix-open state (m-state): operates by the alternating access mechanism with a single substrate-binding site intermittently exposed to either the cytosolic (c-state) or matrix (m-state) side of the inner mitochondrial membrane. In addition to its ADP:ATP antiporter activity, also involved in mitochondrial uncoupling and mitochondrial permeability transition pore (mPTP) activity. Plays a role in mitochondrial uncoupling by acting as a proton transporter: proton transport uncouples the proton flows via the electron transport chain and ATP synthase to reduce the efficiency of ATP production and cause mitochondrial thermogenesis. Proton transporter activity is inhibited by ADP:ATP antiporter activity, suggesting that SLC25A4/ANT1 acts as a master regulator of mitochondrial energy output by maintaining a delicate balance between ATP production (ADP:ATP antiporter activity) and thermogenesis (proton transporter activity). Proton transporter activity requires free fatty acids as cofactor, but does not transport it. Also plays a key role in mPTP opening, a non-specific pore that enables free passage of the mitochondrial membranes to solutes of up to 1.5 kDa, and which contributes to cell death. It is however unclear if SLC25A4/ANT1 constitutes a pore-forming component of mPTP or regulates it. Acts as a regulator of mitophagy independently of ADP:ATP antiporter activity: promotes mitophagy via interaction with TIMM44, leading to inhibit the presequence translocase TIMM23, thereby promoting stabilization of PINK1. The polypeptide is ADP/ATP translocase 1 (Rattus norvegicus (Rat)).